The sequence spans 260 residues: Dof zinc finger protein DOF1.2 (260 aa).

The Dof-type zinc finger occupies 38-92 (PACPRCASSNTKFCYYNNYSLSQPRYFCKGCRRYWTKGGSLRNIPVGGGCRKRSR). Residues Cys40, Cys43, Cys65, and Cys68 each coordinate Zn(2+). The interval 83–124 (VGGGCRKRSRSRQNSHKRFGRNENRPDGLINQDDGFQSSPPG) is disordered. Basic residues predominate over residues 87–101 (CRKRSRSRQNSHKRF).

The protein localises to the nucleus. Transcription factor that binds specifically to a 5'-AA[AG]G-3' consensus core sequence. The chain is Dof zinc finger protein DOF1.2 (DOF1.2) from Arabidopsis thaliana (Mouse-ear cress).